A 168-amino-acid polypeptide reads, in one-letter code: Cell division inhibitor SulA (168 aa).

Residues 106 to 112 (ALQTGNY) form a ftsZ binding region. Residues 161 to 168 (KIHSSLYH) form a lon protease binding region.

It belongs to the SulA family. Interacts with FtsZ. Post-translationally, is rapidly cleaved and degraded by the Lon protease once DNA damage is repaired.

Its function is as follows. Component of the SOS system and an inhibitor of cell division. Accumulation of SulA causes rapid cessation of cell division and the appearance of long, non-septate filaments. In the presence of GTP, binds a polymerization-competent form of FtsZ in a 1:1 ratio, thus inhibiting FtsZ polymerization and therefore preventing it from participating in the assembly of the Z ring. This mechanism prevents the premature segregation of damaged DNA to daughter cells during cell division. The sequence is that of Cell division inhibitor SulA from Serratia marcescens.